We begin with the raw amino-acid sequence, 243 residues long: Collagen triple helix repeat-containing protein 1 (243 aa).

Residues 1-30 form the signal peptide; sequence MRPQGPAASPQRLRGLLLLLLLQLPAPSSA. Residues 57–90 enclose the Collagen-like domain; sequence QGPAGVPGRDGSPGANGIPGTPGIPGRDGFKGEK. The segment at 62 to 85 is disordered; sequence VPGRDGSPGANGIPGTPGIPGRDG. N-linked (GlcNAc...) asparagine glycosylation is present at Asn186.

N-glycosylated. As to expression, isoform 1 is expressed in calcified atherosclerotic plaque and chondrocyte-like cells.

Its subcellular location is the secreted. It localises to the extracellular space. It is found in the extracellular matrix. Functionally, may act as a negative regulator of collagen matrix deposition. The chain is Collagen triple helix repeat-containing protein 1 (CTHRC1) from Homo sapiens (Human).